A 361-amino-acid polypeptide reads, in one-letter code: Dynein axonemal assembly factor 8 (361 aa).

Disordered regions lie at residues 65–191 (DPAG…ERRK) and 309–334 (AQPG…RRPL). The span at 136-157 (TLNTSASQSPRQGPQGEATRSP) shows a compositional bias: polar residues. Residues serine 142 and serine 144 each carry the phosphoserine modification. Low complexity predominate over residues 321 to 334 (GSSSSSGHLGRRPL).

The protein localises to the dynein axonemal particle. Its subcellular location is the cytoplasm. In terms of biological role, in cyliated cells, dynein axonemal particle-specific protein required for deployment of ODA to the axoneme. Interacts with outer dynein arm (ODA) subunits. In Bos taurus (Bovine), this protein is Dynein axonemal assembly factor 8 (DNAAF8).